The sequence spans 147 residues: uncharacterized protein (147 aa).

The HTH LytTR-type domain maps to 44–147 (LVGYIDKEIH…LKSIKERLSI (104 aa)).

Its subcellular location is the cytoplasm. This is an uncharacterized protein from Staphylococcus aureus (strain bovine RF122 / ET3-1).